Here is a 1273-residue protein sequence, read N- to C-terminus: Kinesin-like protein KIN-7O (1273 aa).

The region spanning 3–327 (RIHVSVRARP…LQFASRALRV (325 aa)) is the Kinesin motor domain. An ATP-binding site is contributed by 79–86 (GQTNSGKT). Residues 333–408 (VNEILTDAAL…QRERVLQEQA (76 aa)) adopt a coiled-coil conformation. The tract at residues 452 to 474 (SEDQSNVLSRGSSLESARSERET) is disordered. Polar residues predominate over residues 453–467 (EDQSNVLSRGSSLES). 2 coiled-coil regions span residues 602 to 674 (EAIL…ESEV) and 751 to 1023 (VQSS…MEEE).

This sequence belongs to the TRAFAC class myosin-kinesin ATPase superfamily. Kinesin family. KIN-7 subfamily.

In Arabidopsis thaliana (Mouse-ear cress), this protein is Kinesin-like protein KIN-7O.